Reading from the N-terminus, the 104-residue chain is Protein RnfH (104 aa).

The protein belongs to the UPF0125 (RnfH) family.

This chain is Protein RnfH, found in Pseudomonas fluorescens (strain ATCC BAA-477 / NRRL B-23932 / Pf-5).